The following is a 391-amino-acid chain: 3-ketoacyl-CoA thiolase (391 aa).

The active-site Acyl-thioester intermediate is the C95. Active-site proton acceptor residues include H347 and C377.

This sequence belongs to the thiolase-like superfamily. Thiolase family. Heterotetramer of two alpha chains (FadB) and two beta chains (FadA).

It is found in the cytoplasm. The catalysed reaction is an acyl-CoA + acetyl-CoA = a 3-oxoacyl-CoA + CoA. Its pathway is lipid metabolism; fatty acid beta-oxidation. Its function is as follows. Catalyzes the final step of fatty acid oxidation in which acetyl-CoA is released and the CoA ester of a fatty acid two carbons shorter is formed. In Pseudomonas savastanoi pv. phaseolicola (strain 1448A / Race 6) (Pseudomonas syringae pv. phaseolicola (strain 1448A / Race 6)), this protein is 3-ketoacyl-CoA thiolase.